The following is an 87-amino-acid chain: ADTVSGAALFKANCAQCHVGGGNLVNRAKTLKKEALEKYNMYSAKAIIAQVTHGKGAMPAFGIRLKAEQIENVAAYVLEQADNGWKK.

Heme c contacts are provided by Cys14, Cys17, His18, and Met58.

It belongs to the cytochrome c family. PetJ subfamily. Monomer. In terms of processing, binds 1 heme c group covalently per subunit.

The protein resides in the cellular thylakoid lumen. Its function is as follows. Functions as an electron carrier between membrane-bound cytochrome b6-f and photosystem I in oxygenic photosynthesis. In Aphanizomenon flos-aquae, this protein is Cytochrome c6 (petJ).